Reading from the N-terminus, the 108-residue chain is uncharacterized protein (108 aa).

The segment at 1–23 is disordered; it reads MVDELEKNQVQPQETEENKENAL.

This is an uncharacterized protein from Ureaplasma parvum serovar 3 (strain ATCC 700970).